The primary structure comprises 188 residues: Elongation factor P-like protein (188 aa).

This sequence belongs to the elongation factor P family.

The chain is Elongation factor P-like protein from Xylella fastidiosa (strain M23).